We begin with the raw amino-acid sequence, 82 residues long: uncharacterized protein (82 aa).

To M.thermoautotrophicum MTH386.

This is an uncharacterized protein from Methanocaldococcus jannaschii (strain ATCC 43067 / DSM 2661 / JAL-1 / JCM 10045 / NBRC 100440) (Methanococcus jannaschii).